The sequence spans 302 residues: Glutamyl-Q tRNA(Asp) synthetase (302 aa).

Residues 13–17 (RFAPS) and D49 each bind L-glutamate. Positions 16–26 (PSPTGPLHLGS) match the 'HIGH' region motif. Zn(2+)-binding residues include C105, C107, Y119, and C123. 2 residues coordinate L-glutamate: Y178 and R196. Positions 234 to 238 (KLSKQ) match the 'KMSKS' region motif. K237 is a binding site for ATP.

The protein belongs to the class-I aminoacyl-tRNA synthetase family. GluQ subfamily. Zn(2+) is required as a cofactor.

In terms of biological role, catalyzes the tRNA-independent activation of glutamate in presence of ATP and the subsequent transfer of glutamate onto a tRNA(Asp). Glutamate is transferred on the 2-amino-5-(4,5-dihydroxy-2-cyclopenten-1-yl) moiety of the queuosine in the wobble position of the QUC anticodon. The protein is Glutamyl-Q tRNA(Asp) synthetase of Methylococcus capsulatus (strain ATCC 33009 / NCIMB 11132 / Bath).